The chain runs to 272 residues: Tryptophan synthase alpha chain (272 aa).

Residues Glu-49 and Asp-60 each act as proton acceptor in the active site.

Belongs to the TrpA family. Tetramer of two alpha and two beta chains.

The catalysed reaction is (1S,2R)-1-C-(indol-3-yl)glycerol 3-phosphate + L-serine = D-glyceraldehyde 3-phosphate + L-tryptophan + H2O. Its pathway is amino-acid biosynthesis; L-tryptophan biosynthesis; L-tryptophan from chorismate: step 5/5. Its function is as follows. The alpha subunit is responsible for the aldol cleavage of indoleglycerol phosphate to indole and glyceraldehyde 3-phosphate. The sequence is that of Tryptophan synthase alpha chain from Polaromonas naphthalenivorans (strain CJ2).